The primary structure comprises 173 residues: Shikimate kinase 1 (173 aa).

G14–T19 serves as a coordination point for ATP. S18 lines the Mg(2+) pocket. 3 residues coordinate substrate: D36, R60, and G82. An ATP-binding site is contributed by R120. Substrate is bound at residue R140. Residue Q157 participates in ATP binding.

This sequence belongs to the shikimate kinase family. In terms of assembly, monomer. The cofactor is Mg(2+).

The protein resides in the cytoplasm. The enzyme catalyses shikimate + ATP = 3-phosphoshikimate + ADP + H(+). The protein operates within metabolic intermediate biosynthesis; chorismate biosynthesis; chorismate from D-erythrose 4-phosphate and phosphoenolpyruvate: step 5/7. Functionally, catalyzes the specific phosphorylation of the 3-hydroxyl group of shikimic acid using ATP as a cosubstrate. In Salmonella typhimurium (strain LT2 / SGSC1412 / ATCC 700720), this protein is Shikimate kinase 1.